A 415-amino-acid polypeptide reads, in one-letter code: Cell division control protein 11 (415 aa).

Ser-2 is subject to N-acetylserine. Phosphoserine is present on Ser-2. A Basic motif motif is present at residues 12 to 19 (RKRKHLKR). The Septin-type G domain occupies 19-298 (RGITFTVMIV…ERYRTEALSG (280 aa)). The segment at 29–36 (GQSGSGRS) is G1 motif. GTP is bound by residues 29-36 (GQSGSGRS), Gly-92, 172-180 (KSDSLTRDE), Gly-230, and Arg-247. The segment at 89 to 92 (DTPG) is G3 motif. A G4 motif region spans residues 171 to 174 (SKSD). Ser-305 bears the Phosphoserine mark. The tract at residues 307 to 360 (RPNLTKLNGSSSSSTTTRRNTNPFKQSNNINNDVLNPASDMHGQSTGENNETYM) is disordered. Low complexity predominate over residues 316–328 (SSSSSTTTRRNTN). Thr-327 is modified (phosphothreonine). Polar residues-rich tracts occupy residues 329-340 (PFKQSNNINNDV) and 348-359 (HGQSTGENNETY). Positions 354–414 (ENNETYMTRE…LEKEAKIKQE (61 aa)) form a coiled coil. A Glycyl lysine isopeptide (Lys-Gly) (interchain with G-Cter in SUMO) cross-link involves residue Lys-412.

Belongs to the TRAFAC class TrmE-Era-EngA-EngB-Septin-like GTPase superfamily. Septin GTPase family. Component of the septin complex which consists of CDC3, CDC10, CDC11, CDC12 and probably SHS1 and rearranges to a cortical collar of highly ordered filaments at the mother-bud-neck. A complex formed by CDC3, CDC10, CDC11 and CDC12 is capable of forming long filaments in vitro and the components seem to be present in a 2:2:2:2 arrangement in vivo. The filaments are proposed to be formed by the end-to-end polymerization of CDC3-CDC12-CDC11 complexes with CDC10 serving as a bridge to bundle the polymers into paired filaments. Component of the GIN4 complex composed of at least BNI5, CDC3, CDC10, CDC11, CDC12, GIN4, NAP1 and SHS1. Self-associates. Interacts with BEM4, KCC4, SPR28 and SYP1. Interacts with BNI5. Post-translationally, sumoylated during mitosis on the mother cell side of the bud neck. Sumoylation probably plays a central role in regulating septin ring disassembly during the cell cycle.

The protein resides in the membrane. The protein localises to the bud neck. Septins are GTPases involved in cytokinesis that assemble early in the cell cycle as a patch at the incipient bud site and form a ring approximate 15 minutes before bud emergence, which transforms into an hour-glass shaped collar of cortical filaments that spans both sides of the mother-bud neck. This collar persists until just before cytokinesis, when it splits into two rings that occupy opposite sides of the neck. The septins at the bud neck serve as a structural scaffold that recruits different components involved in diverse processes at specific stages during the cell cycle. Many proteins bind asymmetrically to the septin collar. The septin assembly is regulated by protein kinases GIN4 and/or CLA4. May act by recruiting MYO1 and HOF1, a protein involved in septation, to the site of cleavage. Septins are also involved in cell morphogenesis, bud site selection, chitin deposition, cell cycle regulation, cell compartmentalization and spore wall formation. CDCd11 with SHS1 11 are involved in the recruitment of BNI5 and thereby ensure efficient localization at the bud neck of MYO1, the type II myosin of the actomyosin contractile ring. The sequence is that of Cell division control protein 11 from Saccharomyces cerevisiae (strain ATCC 204508 / S288c) (Baker's yeast).